Consider the following 311-residue polypeptide: 3-oxo-4,17-pregnadiene-20-carboxyl-CoA hydratase alpha subunit (311 aa).

The segment at 198–295 (WDGVKAHELR…VAIGMPVRAT (98 aa)) is DUF35.

Belongs to the thioester dehydratase family. In terms of assembly, heterodimer composed of ChsH1 and ChsH2. Two heterodimers combine to form a heterotetramer. The complex interacts with Ltp2 via the DUF35 C-terminal region of ChsH2. The ChsH1-ChsH2-Ltp2 protein complex is composed of two protomers that form a heterohexameric structure through the Ltp2 dimerization interface.

The enzyme catalyses 3-oxochola-4,17-dien-22-oyl-CoA + H2O = 17-hydroxy-3-oxochol-4-en-22-oyl-CoA. It catalyses the reaction (2E)-octenoyl-CoA + H2O = 3-hydroxyoctanoyl-CoA. The catalysed reaction is (2E)-decenoyl-CoA + H2O = 3-hydroxydecanoyl-CoA. The protein operates within steroid metabolism; cholesterol degradation. In the absence of the Ltp2 aldolase, ChsH1/ChsH2 can hydrate only about 30% of the 3-OPDC-CoA substrate. Complete turnover requires the presence of Ltp2. Involved in cholesterol side chain degradation. Catalyzes the hydration of 3-oxo-4,17-pregnadiene-20-carboxyl-CoA (3-OPDC-CoA) to form 17-hydroxy-3-oxo-4-pregnene-20-carboxyl-CoA (17-HOPC-CoA), in the modified beta-oxidation pathway for cholesterol side chain degradation. Can also use octenoyl-CoA and decenoyl-CoA, with lower efficiency. The protein is 3-oxo-4,17-pregnadiene-20-carboxyl-CoA hydratase alpha subunit of Mycobacterium tuberculosis (strain ATCC 25618 / H37Rv).